A 445-amino-acid polypeptide reads, in one-letter code: Gastrula zinc finger protein 5-1 (445 aa).

Residues Met1 to Gln38 form a disordered region. Phosphoserine; by CK2 is present on Ser89. The segment at Phe185 to His210 adopts a C2H2-type 1; atypical zinc-finger fold. 7 consecutive C2H2-type zinc fingers follow at residues Phe239–His261, Phe267–His289, Tyr295–His317, Tyr323–His345, Phe351–His373, Phe379–His401, and Phe407–His429.

Binds to RNA homomers. The sequence is that of Gastrula zinc finger protein 5-1 from Xenopus laevis (African clawed frog).